We begin with the raw amino-acid sequence, 94 residues long: Co-chaperonin GroES (94 aa).

This sequence belongs to the GroES chaperonin family. Heptamer of 7 subunits arranged in a ring. Interacts with the chaperonin GroEL.

Its subcellular location is the cytoplasm. Functionally, together with the chaperonin GroEL, plays an essential role in assisting protein folding. The GroEL-GroES system forms a nano-cage that allows encapsulation of the non-native substrate proteins and provides a physical environment optimized to promote and accelerate protein folding. GroES binds to the apical surface of the GroEL ring, thereby capping the opening of the GroEL channel. This chain is Co-chaperonin GroES, found in Ehrlichia canis (strain Jake).